The following is a 24-amino-acid chain: Formate ester dehydrogenase gamma chain (24 aa).

Heterotrimer composed of an alpha, a beta and a gamma chain.

In Amycolatopsis methanolica, this protein is Formate ester dehydrogenase gamma chain.